The following is a 2439-amino-acid chain: Centrosomal protein of 290 kDa (2439 aa).

2 coiled-coil regions span residues 75–913 and 1271–1576; these read AEQA…VVTE and NTML…YMDT. Disordered regions lie at residues 1802–1824, 1867–1890, and 2017–2048; these read ETLNKDLQRSQKSQNKLQSEKEA, ELDRKSISEPADKRSTLKEDKSSK, and ESRLSKEPPSRPSTSGRGSDTPSQREHEFQKE. A compositionally biased stretch (basic and acidic residues) spans 2039–2048; the sequence is SQREHEFQKE. Positions 2046 to 2394 form a coiled coil; that stretch reads QKENLRLSTE…KLTQELKHFD (349 aa).

As to quaternary structure, part of the tectonic-like complex (also named B9 complex).

It is found in the cytoplasm. The protein resides in the cytoskeleton. Its subcellular location is the microtubule organizing center. It localises to the centrosome. The protein localises to the centriolar satellite. It is found in the nucleus. The protein resides in the cilium basal body. Involved in early and late steps in cilia formation. May play a role in early ciliogenesis in the disappearance of centriolar satellites and in the transition of primary ciliar vesicles (PCVs) to capped ciliary vesicles (CCVs). In the ciliary transition zone is part of the tectonic-like complex which is required for tissue-specific ciliogenesis and may regulate ciliary membrane composition. Involved in regulation of the BBSome complex integrity and in ciliary targeting of selected BBSome cargos. Required for the correct localization of ciliary and phototransduction proteins in retinal photoreceptor cells; may play a role in ciliary transport processes. Involved in development of the nervous system and kidney. In Danio rerio (Zebrafish), this protein is Centrosomal protein of 290 kDa (cep290).